A 139-amino-acid chain; its full sequence is Acid shock protein (139 aa).

The N-terminal stretch at 1-21 is a signal peptide; sequence MKKVLALVVAAAMGLSSAAFA. A propeptide spanning residues 22–80 is cleaved from the precursor; sequence ADAVSTTQAPAATHSTAAKTTHHKKHHKAAAKPAAEQKAQAAKKHKKAEAKPAAAQKAQ. Low complexity predominate over residues 27-40; it reads TTQAPAATHSTAAK. Residues 27-139 form a disordered region; it reads TTQAPAATHS…AAKPTAQPAA (113 aa). Residues 41–51 show a composition bias toward basic residues; that stretch reads TTHHKKHHKAA. Low complexity-rich tracts occupy residues 52–61 and 90–99; these read AKPAAEQKAQ and AKPAAPQKAQ. Residues 118–130 show a composition bias toward basic residues; the sequence is AAKKHHKTTKHQA.

It belongs to the Asr family. Proteolytic processing gives rise to the active protein.

It localises to the periplasm. In terms of biological role, required for growth and/or survival at acidic conditions. This Klebsiella pneumoniae protein is Acid shock protein (asr).